The chain runs to 601 residues: Ubiquitin carboxyl-terminal hydrolase MINDY-2 (601 aa).

The disordered stretch occupies residues 1 to 205 (MENSPDSPQP…LCKEEEEDPA (205 aa)). Over residues 24 to 34 (EGRRRGGREAE) the composition is skewed to basic and acidic residues. At Thr62 the chain carries Phosphothreonine. Ser82 bears the Phosphoserine mark. 3 stretches are compositionally biased toward low complexity: residues 127-141 (EEPS…SCSE), 148-169 (SPSL…SSEF), and 186-195 (GAAGPPRAAP). Cys244 functions as the Nucleophile in the catalytic mechanism. His426 serves as the catalytic Proton acceptor. A ubiquitin-binding domain (UBD) region spans residues 485–537 (GQQDQIDQDYLMALSLQQEQQSQEINWEQIPEGISDLELAKKLQEEEDRRASQ). The interval 534–601 (RASQYYQEQE…EKEKNSCVIL (68 aa)) is disordered. Over residues 536 to 570 (SQYYQEQEQAQAVVTTTTPSTQAQQGQPAQASPSS) the composition is skewed to low complexity. Positions 577-601 (SERKRKEPREKDKEKEKEKNSCVIL) are enriched in basic and acidic residues.

Belongs to the MINDY deubiquitinase family. FAM63 subfamily.

The catalysed reaction is Thiol-dependent hydrolysis of ester, thioester, amide, peptide and isopeptide bonds formed by the C-terminal Gly of ubiquitin (a 76-residue protein attached to proteins as an intracellular targeting signal).. Hydrolase that can remove 'Lys-48'-linked conjugated ubiquitin from proteins. Can also bind to polyubiquitin chains of different linkage types, including 'Lys-6', 'Lys-11', 'Lys-29', 'Lys-33' and 'Lys-63'. May play a regulatory role at the level of protein turnover. The polypeptide is Ubiquitin carboxyl-terminal hydrolase MINDY-2 (Mindy2) (Mus musculus (Mouse)).